Here is a 208-residue protein sequence, read N- to C-terminus: Thymidylate kinase (208 aa).

10–17 (GPEGSGKT) contributes to the ATP binding site.

This sequence belongs to the thymidylate kinase family.

It carries out the reaction dTMP + ATP = dTDP + ADP. Phosphorylation of dTMP to form dTDP in both de novo and salvage pathways of dTTP synthesis. The polypeptide is Thymidylate kinase (Bacillus cereus (strain ATCC 14579 / DSM 31 / CCUG 7414 / JCM 2152 / NBRC 15305 / NCIMB 9373 / NCTC 2599 / NRRL B-3711)).